Here is a 101-residue protein sequence, read N- to C-terminus: Urease subunit beta (101 aa).

The protein belongs to the urease beta subunit family. Heterotrimer of UreA (gamma), UreB (beta) and UreC (alpha) subunits. Three heterotrimers associate to form the active enzyme.

The protein localises to the cytoplasm. The enzyme catalyses urea + 2 H2O + H(+) = hydrogencarbonate + 2 NH4(+). It participates in nitrogen metabolism; urea degradation; CO(2) and NH(3) from urea (urease route): step 1/1. This is Urease subunit beta from Rhodopseudomonas palustris (strain HaA2).